Here is a 205-residue protein sequence, read N- to C-terminus: Large ribosomal subunit protein eL15 (205 aa).

Disordered regions lie at residues 70 to 90 and 172 to 197; these read GRKRQVPGGRTGGKPKTHGVN and RGLRRKGTHRASKTRPSRQANYKRRN.

This sequence belongs to the eukaryotic ribosomal protein eL15 family.

The protein is Large ribosomal subunit protein eL15 (rpl15-1) of Dictyostelium discoideum (Social amoeba).